The following is a 205-amino-acid chain: Ribosomal RNA small subunit methyltransferase G (205 aa).

Residues G76, L81, 127 to 128, and R140 contribute to the S-adenosyl-L-methionine site; that span reads IE.

This sequence belongs to the methyltransferase superfamily. RNA methyltransferase RsmG family.

It is found in the cytoplasm. The catalysed reaction is guanosine(527) in 16S rRNA + S-adenosyl-L-methionine = N(7)-methylguanosine(527) in 16S rRNA + S-adenosyl-L-homocysteine. Specifically methylates the N7 position of guanine in position 527 of 16S rRNA. The polypeptide is Ribosomal RNA small subunit methyltransferase G (Francisella tularensis subsp. tularensis (strain FSC 198)).